The sequence spans 393 residues: Acetate kinase (393 aa).

Asn-7 contributes to the Mg(2+) binding site. Residue Lys-14 coordinates ATP. Substrate is bound at residue Arg-89. Asp-146 functions as the Proton donor/acceptor in the catalytic mechanism. ATP contacts are provided by residues 204–208 (HIGNG), 279–281 (DSR), and 327–331 (GIGEN). Glu-379 contacts Mg(2+).

Belongs to the acetokinase family. Homodimer. Mg(2+) is required as a cofactor. The cofactor is Mn(2+).

The protein localises to the cytoplasm. It carries out the reaction acetate + ATP = acetyl phosphate + ADP. The protein operates within metabolic intermediate biosynthesis; acetyl-CoA biosynthesis; acetyl-CoA from acetate: step 1/2. Its function is as follows. Catalyzes the formation of acetyl phosphate from acetate and ATP. Can also catalyze the reverse reaction. This Acholeplasma laidlawii (strain PG-8A) protein is Acetate kinase.